Reading from the N-terminus, the 377-residue chain is Ribosomal RNA large subunit methyltransferase G (377 aa).

The protein belongs to the methyltransferase superfamily. RlmG family.

The protein resides in the cytoplasm. It carries out the reaction guanosine(1835) in 23S rRNA + S-adenosyl-L-methionine = N(2)-methylguanosine(1835) in 23S rRNA + S-adenosyl-L-homocysteine + H(+). Its function is as follows. Specifically methylates the guanine in position 1835 (m2G1835) of 23S rRNA. This chain is Ribosomal RNA large subunit methyltransferase G, found in Streptomyces coelicolor (strain ATCC BAA-471 / A3(2) / M145).